The following is a 308-amino-acid chain: Probable GTP 3',8-cyclase (308 aa).

The region spanning 4-224 (RFGRPLEDLR…QIRKKHFRPR (221 aa)) is the Radical SAM core domain. R13 serves as a coordination point for GTP. 3 residues coordinate [4Fe-4S] cluster: C20, C24, and C27. K60 contributes to the GTP binding site. S-adenosyl-L-methionine is bound at residue G64. T90 provides a ligand contact to GTP. S114 serves as a coordination point for S-adenosyl-L-methionine. Residue K151 participates in GTP binding. [4Fe-4S] cluster contacts are provided by C245 and C248. GTP is bound at residue 250–252 (RIR). [4Fe-4S] cluster is bound at residue C262.

It belongs to the radical SAM superfamily. MoaA family. [4Fe-4S] cluster serves as cofactor.

The enzyme catalyses GTP + AH2 + S-adenosyl-L-methionine = (8S)-3',8-cyclo-7,8-dihydroguanosine 5'-triphosphate + 5'-deoxyadenosine + L-methionine + A + H(+). It participates in cofactor biosynthesis; molybdopterin biosynthesis. Functionally, catalyzes the cyclization of GTP to (8S)-3',8-cyclo-7,8-dihydroguanosine 5'-triphosphate. In Saccharolobus islandicus (strain Y.N.15.51 / Yellowstone #2) (Sulfolobus islandicus), this protein is Probable GTP 3',8-cyclase.